Reading from the N-terminus, the 352-residue chain is Holliday junction branch migration complex subunit RuvB (352 aa).

Residues 13–201 (FSLRKKELRL…FGISQKIEFY (189 aa)) are large ATPase domain (RuvB-L). ATP contacts are provided by residues arginine 41, glycine 82, lysine 85, threonine 86, threonine 87, 148 to 150 (EDF), arginine 191, tyrosine 201, and arginine 238. Threonine 86 serves as a coordination point for Mg(2+). The segment at 202–273 (TCDELKQIID…LIKKALNSYQ (72 aa)) is small ATPAse domain (RuvB-S). A head domain (RuvB-H) region spans residues 276–352 (EKGLDYVDRQ…KYIDSKNDNF (77 aa)). Residues arginine 330 and arginine 335 each contribute to the DNA site.

This sequence belongs to the RuvB family. Homohexamer. Forms an RuvA(8)-RuvB(12)-Holliday junction (HJ) complex. HJ DNA is sandwiched between 2 RuvA tetramers; dsDNA enters through RuvA and exits via RuvB. An RuvB hexamer assembles on each DNA strand where it exits the tetramer. Each RuvB hexamer is contacted by two RuvA subunits (via domain III) on 2 adjacent RuvB subunits; this complex drives branch migration. In the full resolvosome a probable DNA-RuvA(4)-RuvB(12)-RuvC(2) complex forms which resolves the HJ.

The protein localises to the cytoplasm. The enzyme catalyses ATP + H2O = ADP + phosphate + H(+). In terms of biological role, the RuvA-RuvB-RuvC complex processes Holliday junction (HJ) DNA during genetic recombination and DNA repair, while the RuvA-RuvB complex plays an important role in the rescue of blocked DNA replication forks via replication fork reversal (RFR). RuvA specifically binds to HJ cruciform DNA, conferring on it an open structure. The RuvB hexamer acts as an ATP-dependent pump, pulling dsDNA into and through the RuvAB complex. RuvB forms 2 homohexamers on either side of HJ DNA bound by 1 or 2 RuvA tetramers; 4 subunits per hexamer contact DNA at a time. Coordinated motions by a converter formed by DNA-disengaged RuvB subunits stimulates ATP hydrolysis and nucleotide exchange. Immobilization of the converter enables RuvB to convert the ATP-contained energy into a lever motion, pulling 2 nucleotides of DNA out of the RuvA tetramer per ATP hydrolyzed, thus driving DNA branch migration. The RuvB motors rotate together with the DNA substrate, which together with the progressing nucleotide cycle form the mechanistic basis for DNA recombination by continuous HJ branch migration. Branch migration allows RuvC to scan DNA until it finds its consensus sequence, where it cleaves and resolves cruciform DNA. The chain is Holliday junction branch migration complex subunit RuvB from Prochlorococcus marinus (strain MIT 9312).